A 286-amino-acid polypeptide reads, in one-letter code: Pantothenate synthetase (286 aa).

Residue 30 to 37 (MGNLHAGH) participates in ATP binding. His-37 (proton donor) is an active-site residue. A (R)-pantoate-binding site is contributed by Gln-61. Gln-61 is a beta-alanine binding site. 149-152 (GEKD) lines the ATP pocket. Gln-155 contacts (R)-pantoate. Residues Val-178 and 186–189 (MSSR) each bind ATP.

The protein belongs to the pantothenate synthetase family. In terms of assembly, homodimer.

Its subcellular location is the cytoplasm. It catalyses the reaction (R)-pantoate + beta-alanine + ATP = (R)-pantothenate + AMP + diphosphate + H(+). It functions in the pathway cofactor biosynthesis; (R)-pantothenate biosynthesis; (R)-pantothenate from (R)-pantoate and beta-alanine: step 1/1. In terms of biological role, catalyzes the condensation of pantoate with beta-alanine in an ATP-dependent reaction via a pantoyl-adenylate intermediate. The chain is Pantothenate synthetase from Thioalkalivibrio sulfidiphilus (strain HL-EbGR7).